Reading from the N-terminus, the 179-residue chain is Alkyl hydroperoxide reductase AhpD (179 aa).

Catalysis depends on Cys130, which acts as the Proton donor. A disulfide bridge links Cys130 with Cys133. The active-site Cysteine sulfenic acid (-SOH) intermediate is the Cys133.

This sequence belongs to the AhpD family. As to quaternary structure, homotrimer.

It catalyses the reaction N(6)-[(R)-dihydrolipoyl]-L-lysyl-[lipoyl-carrier protein] + a hydroperoxide = N(6)-[(R)-lipoyl]-L-lysyl-[lipoyl-carrier protein] + an alcohol + H2O. Functionally, antioxidant protein with alkyl hydroperoxidase activity. Required for the reduction of the AhpC active site cysteine residues and for the regeneration of the AhpC enzyme activity. The sequence is that of Alkyl hydroperoxide reductase AhpD from Rhodococcus erythropolis (strain PR4 / NBRC 100887).